Here is a 133-residue protein sequence, read N- to C-terminus: ATP synthase epsilon chain, chloroplastic (133 aa).

The protein belongs to the ATPase epsilon chain family. As to quaternary structure, F-type ATPases have 2 components, CF(1) - the catalytic core - and CF(0) - the membrane proton channel. CF(1) has five subunits: alpha(3), beta(3), gamma(1), delta(1), epsilon(1). CF(0) has three main subunits: a, b and c.

It localises to the plastid. The protein resides in the chloroplast thylakoid membrane. Its function is as follows. Produces ATP from ADP in the presence of a proton gradient across the membrane. The chain is ATP synthase epsilon chain, chloroplastic from Lotus japonicus (Lotus corniculatus var. japonicus).